Reading from the N-terminus, the 348-residue chain is Protein RecA (348 aa).

67–74 lines the ATP pocket; sequence GPESSGKT.

The protein belongs to the RecA family.

The protein localises to the cytoplasm. Its function is as follows. Can catalyze the hydrolysis of ATP in the presence of single-stranded DNA, the ATP-dependent uptake of single-stranded DNA by duplex DNA, and the ATP-dependent hybridization of homologous single-stranded DNAs. It interacts with LexA causing its activation and leading to its autocatalytic cleavage. The protein is Protein RecA of Kineococcus radiotolerans (strain ATCC BAA-149 / DSM 14245 / SRS30216).